The sequence spans 96 residues: MSNVDRYDVHRDGIEKDRKRSRSRKPHQNGQSQSTMDNRPPWNNDTYIEGYDDVDEHGKFRKRGGGMPKTIDRQQEELTKNWTESLREQHHQPQKQ.

Residues 1–18 (MSNVDRYDVHRDGIEKDR) are compositionally biased toward basic and acidic residues. The disordered stretch occupies residues 1-96 (MSNVDRYDVH…REQHHQPQKQ (96 aa)). Positions 28–46 (QNGQSQSTMDNRPPWNNDT) are enriched in polar residues. The span at 70–96 (TIDRQQEELTKNWTESLREQHHQPQKQ) shows a compositional bias: basic and acidic residues.

This is an uncharacterized protein from Caenorhabditis elegans.